Reading from the N-terminus, the 124-residue chain is Translation initiation factor 5A (124 aa).

The segment at 27–53 (TSYSTSKPGKHGSAKARVEGTGVFDGQ) is disordered. Lysine 36 carries the post-translational modification Hypusine.

It belongs to the eIF-5A family.

It is found in the cytoplasm. Its function is as follows. Functions by promoting the formation of the first peptide bond. This is Translation initiation factor 5A from Natronomonas pharaonis (strain ATCC 35678 / DSM 2160 / CIP 103997 / JCM 8858 / NBRC 14720 / NCIMB 2260 / Gabara) (Halobacterium pharaonis).